The sequence spans 395 residues: Proteinase-activated receptor 4 (395 aa).

The N-terminal stretch at 1–16 (MCWPLLYPLMLGFSIS) is a signal peptide. Residues 17–58 (PAECQTPSIYDDVESTREGQEASLRPTVELNESKSPDKPNPR) constitute a propeptide, removed for receptor activation. The disordered stretch occupies residues 46–66 (LNESKSPDKPNPRGFPGKPCA). The segment covering 47–56 (NESKSPDKPN) has biased composition (basic and acidic residues). Topologically, residues 59-93 (GFPGKPCANNSDTLELPASSEALLLGWVPTRLVPA) are extracellular. A glycan (N-linked (GlcNAc...) asparagine) is linked at Asn-67. The chain crosses the membrane as a helical span at residues 94–114 (IYGLVVVVGLPANGLALWVLA). The Cytoplasmic portion of the chain corresponds to 115-119 (TRVPR). Residues 120–140 (LPSTILLMNLAVADLLLALVL) form a helical membrane-spanning segment. The Extracellular portion of the chain corresponds to 141-161 (PPRLVYHLRGQRWPFGEAACR). Cys-160 and Cys-239 are disulfide-bonded. The chain crosses the membrane as a helical span at residues 162–182 (VATAALYGHMYGSVLLLAAVS). Topologically, residues 183–203 (LDRYLALVHSLRARALRGQRL) are cytoplasmic. The helical transmembrane segment at 204–224 (TTILCLVAWLSAATLVLPLTF) threads the bilayer. Residues 225–254 (HRQTFLLAGSDRMLCHDALPLAEQTSHWRP) lie on the Extracellular side of the membrane. A helical membrane pass occupies residues 255–275 (AFICLAVLGCFVPLLAMVLCY). At 276-295 (GATLRALAANGQRYSHAVRL) the chain is on the cytoplasmic side. A helical membrane pass occupies residues 296 to 316 (TALVLFSAVAAFTPSNVLLVL). Topologically, residues 317 to 330 (HYSNPSPEAWGNLY) are extracellular. A helical transmembrane segment spans residues 331–354 (GAYVPSLALSTLNSCVDPFIYYYV). Over 355–395 (SHEFREKVRAMLCRQLKASSSSQASREAGSRGTAICSSTLL) the chain is Cytoplasmic.

It belongs to the G-protein coupled receptor 1 family. In terms of processing, a proteolytic cleavage generates a new N-terminus that functions as a tethered ligand.

Its subcellular location is the cell membrane. Functionally, receptor for activated thrombin or trypsin coupled to G proteins that stimulate phosphoinositide hydrolysis. May play a role in platelets activation. The chain is Proteinase-activated receptor 4 (F2rl3) from Rattus norvegicus (Rat).